The primary structure comprises 344 residues: DNA integrity scanning protein DisA (344 aa).

In terms of domain architecture, DAC spans 1–133 (MALLAPGTPI…GRRYLIERPE (133 aa)). ATP is bound by residues Gly-61 and 92–96 (TRHRT).

The protein belongs to the DisA family. In terms of assembly, homooctamer. Requires Mg(2+) as cofactor.

It carries out the reaction 2 ATP = 3',3'-c-di-AMP + 2 diphosphate. Participates in a DNA-damage check-point. DisA forms globular foci that rapidly scan along the chromosomes searching for lesions. Its function is as follows. Also has diadenylate cyclase activity, catalyzing the condensation of 2 ATP molecules into cyclic di-AMP (c-di-AMP). c-di-AMP likely acts as a signaling molecule that may couple DNA integrity with a cellular process. This is DNA integrity scanning protein DisA from Cutibacterium acnes (strain DSM 16379 / KPA171202) (Propionibacterium acnes).